Consider the following 153-residue polypeptide: Aspartate carbamoyltransferase regulatory chain (153 aa).

Positions 109, 114, 138, and 141 each coordinate Zn(2+).

Belongs to the PyrI family. In terms of assembly, contains catalytic and regulatory chains. Zn(2+) is required as a cofactor.

Its function is as follows. Involved in allosteric regulation of aspartate carbamoyltransferase. The chain is Aspartate carbamoyltransferase regulatory chain from Escherichia coli (strain ATCC 8739 / DSM 1576 / NBRC 3972 / NCIMB 8545 / WDCM 00012 / Crooks).